The sequence spans 831 residues: Periplasmic nitrate reductase (831 aa).

The segment at residues 1-35 (MTISDSRRTFLKASAAAATASAAGIPLANGTAAEA) is a signal peptide (tat-type signal). One can recognise a 4Fe-4S Mo/W bis-MGD-type domain in the interval 42–98 (IRWDKAACRFCGTGCSVLVGTKEGRVVATQGDPDAPVNRGLNCIKGYFLSKIMYGED). [4Fe-4S] cluster-binding residues include C49, C52, C56, and C84. Mo-bis(molybdopterin guanine dinucleotide)-binding positions include K86, Q153, N178, C182, 215 to 222 (WGSNMAEM), 246 to 250 (STYEH), 265 to 267 (QTD), M375, Q379, N485, 511 to 512 (SD), K534, D561, and 721 to 730 (TGRVLEHWHS). W797 contacts substrate. N805 and K822 together coordinate Mo-bis(molybdopterin guanine dinucleotide).

Belongs to the prokaryotic molybdopterin-containing oxidoreductase family. NasA/NapA/NarB subfamily. Component of the periplasmic nitrate reductase NapAB complex composed of NapA and NapB. It depends on [4Fe-4S] cluster as a cofactor. The cofactor is Mo-bis(molybdopterin guanine dinucleotide). In terms of processing, predicted to be exported by the Tat system. The position of the signal peptide cleavage has not been experimentally proven.

The protein localises to the periplasm. The catalysed reaction is 2 Fe(II)-[cytochrome] + nitrate + 2 H(+) = 2 Fe(III)-[cytochrome] + nitrite + H2O. In terms of biological role, catalytic subunit of the periplasmic nitrate reductase complex NapAB. Receives electrons from NapB and catalyzes the reduction of nitrate to nitrite. The sequence is that of Periplasmic nitrate reductase from Dinoroseobacter shibae (strain DSM 16493 / NCIMB 14021 / DFL 12).